Consider the following 252-residue polypeptide: tRNA (guanine-N(7)-)-methyltransferase (252 aa).

Glutamate 80, glutamate 105, aspartate 132, and aspartate 155 together coordinate S-adenosyl-L-methionine. Aspartate 155 is a catalytic residue. Residues lysine 159, aspartate 191, and 231–234 contribute to the substrate site; that span reads TKFE.

The protein belongs to the class I-like SAM-binding methyltransferase superfamily. TrmB family.

It catalyses the reaction guanosine(46) in tRNA + S-adenosyl-L-methionine = N(7)-methylguanosine(46) in tRNA + S-adenosyl-L-homocysteine. The protein operates within tRNA modification; N(7)-methylguanine-tRNA biosynthesis. In terms of biological role, catalyzes the formation of N(7)-methylguanine at position 46 (m7G46) in tRNA. This chain is tRNA (guanine-N(7)-)-methyltransferase, found in Actinobacillus succinogenes (strain ATCC 55618 / DSM 22257 / CCUG 43843 / 130Z).